A 549-amino-acid polypeptide reads, in one-letter code: Phosphoenolpyruvate carboxykinase (ATP) (549 aa).

250–257 (GLSGTGKT) serves as a coordination point for ATP.

Belongs to the phosphoenolpyruvate carboxykinase (ATP) family. As to quaternary structure, homotetramer.

The enzyme catalyses oxaloacetate + ATP = phosphoenolpyruvate + ADP + CO2. The protein operates within carbohydrate biosynthesis; gluconeogenesis. This Saccharomyces cerevisiae (strain ATCC 204508 / S288c) (Baker's yeast) protein is Phosphoenolpyruvate carboxykinase (ATP) (PCK1).